Consider the following 70-residue polypeptide: Small ribosomal subunit protein bS21 (70 aa).

This sequence belongs to the bacterial ribosomal protein bS21 family.

The protein is Small ribosomal subunit protein bS21 of Nitrosospira multiformis (strain ATCC 25196 / NCIMB 11849 / C 71).